The sequence spans 791 residues: Cytochrome c oxidase polypeptide I+III (791 aa).

The COX1 stretch occupies residues 1–473; it reads MAITAKPKAG…LLSTIGAYIL (473 aa). The chain crosses the membrane as a helical span at residues 29-49; it reads LMYTATAFFAFALAGVFSLLI. His73 provides a ligand contact to Fe(II)-heme a. Transmembrane regions (helical) follow at residues 78 to 98, 111 to 131, 155 to 175, 201 to 221, 244 to 264, 282 to 302, 312 to 332, 347 to 367, 381 to 401, 423 to 443, 464 to 484, 566 to 586, 617 to 637, 657 to 677, 691 to 711, 729 to 749, and 771 to 791; these read LFFF…VPLM, AFSY…YFFP, FYLA…ANFV, ASVL…LVLL, FFWF…LGIL, MVWA…HHMF, IAFA…LFNI, LYWV…GVML, FVVA…AFAG, FWLF…LGYL, LLST…IYTM, FAFF…WVFL, AWMG…ILIA, LWLA…VHFA, FGLL…SWEF, FFTI…GLIL, and SMYW…FYVW. Residues His250, Tyr254, His299, and His300 each coordinate Cu cation. The segment at residues 250-254 is a cross-link (1'-histidyl-3'-tyrosine (His-Tyr)); that stretch reads HPTVY. His385 contacts heme a3. His387 is a binding site for Fe(II)-heme a. Positions 545–791 are COX3; the sequence is DPAHIHLPNS…LVIVTIFYVW (247 aa).

In the N-terminal section; belongs to the heme-copper respiratory oxidase family. This sequence in the C-terminal section; belongs to the cytochrome c oxidase subunit 3 family. Possibly a heterodimer of A-protein (contains: cytochrome c oxidase subunits I and III) and subunit II. The A-protein could also present a precursor form of subunits I and III. Cu(2+) serves as cofactor. Requires heme as cofactor.

It is found in the cell membrane. It catalyses the reaction 4 Fe(II)-[cytochrome c] + O2 + 8 H(+)(in) = 4 Fe(III)-[cytochrome c] + 2 H2O + 4 H(+)(out). The protein operates within energy metabolism; oxidative phosphorylation. Functionally, cytochrome c oxidase is the component of the respiratory chain that catalyzes the reduction of oxygen to water. Subunits 1-3 form the functional core of the enzyme complex. Co I is the catalytic subunit of the enzyme. Electrons originating in cytochrome c are transferred via the copper A center of subunit 2 and heme a of subunit 1 to the bimetallic center formed by heme a3 and copper B. This cytochrome c oxidase shows proton pump activity across the membrane in addition to the electron transfer. This Thermus thermophilus (strain ATCC 27634 / DSM 579 / HB8) protein is Cytochrome c oxidase polypeptide I+III (caaA).